A 157-amino-acid polypeptide reads, in one-letter code: NudC domain-containing protein 2 (157 aa).

Ser-2 is subject to N-acetylserine. In terms of domain architecture, CS spans 14 to 104 (CGTPWGQWYQ…DAANCWTSLL (91 aa)). A disordered region spans residues 134–157 (FDFSGAEISGNYTKGGPDFSNLEK). The residue at position 142 (Ser-142) is a Phosphoserine. Tyr-145 carries the post-translational modification Phosphotyrosine.

As to quaternary structure, interacts with LIS1.

It localises to the chromosome. The protein resides in the centromere. The protein localises to the kinetochore. It is found in the cytoplasm. Its subcellular location is the cytoskeleton. It localises to the microtubule organizing center. The protein resides in the centrosome. The protein localises to the spindle pole. In terms of biological role, may regulate the LIS1/dynein pathway by stabilizing LIS1 with Hsp90 chaperone. The polypeptide is NudC domain-containing protein 2 (NUDCD2) (Homo sapiens (Human)).